Reading from the N-terminus, the 113-residue chain is Protein INCREASED RESISTANCE TO MYZUS PERSICAE 1 (113 aa).

Residues 56-100 (DFLKTCSLCNRSLCHHRDIYMYRGNNAFCSLECREKQIKLDEKKA) form an FLZ-type zinc finger.

The protein belongs to the FLZ family. In terms of assembly, interacts with KIN10 and KIN11 via its FLZ-type zinc finger domain. Interacts with KINB3 via its N-terminal part. Interacts with GEBP.

It localises to the nucleus. Its subcellular location is the cytoplasm. May act as an adapter to facilitate the interaction of SnRK1 complex with effector proteins, conferring tissue- and stimulus-type specific differences in the SnRK1 regulation pathway. This is Protein INCREASED RESISTANCE TO MYZUS PERSICAE 1 from Arabidopsis thaliana (Mouse-ear cress).